The chain runs to 783 residues: Probable potassium transporter 2 (783 aa).

Over 1 to 21 (MDAEAGVGGADQLPWRQHYRN) the chain is Cytoplasmic. A helical transmembrane segment spans residues 22-42 (LLLLAYQSFGVVYGDLSTSPL). The Extracellular segment spans residues 43-61 (YVYKSTFSGRLRRYQDEQT). Residues 62–82 (VFGVLSLIFWTFTLIPLLKYV) traverse the membrane as a helical segment. Residues 83-152 (TIVLSADDNG…FMEKHKNART (70 aa)) lie on the Cytoplasmic side of the membrane. A helical membrane pass occupies residues 153–173 (VLLLIVLCGASMMIGDGILTP). Over 174–189 (AISVLSSMSGLKVRAT) the chain is Extracellular. The chain crosses the membrane as a helical span at residues 190-210 (GLHDRSVVLLSCIVLVGLFAL). The Cytoplasmic portion of the chain corresponds to 211 to 217 (QHRGTQK). A helical transmembrane segment spans residues 218–238 (VAFMFAPIVVIWLFCIGGIGL). At 239–268 (YNIIHWNPRIYQALSPYYIVKFFRTTGKDG) the chain is on the extracellular side. The chain crosses the membrane as a helical span at residues 269–289 (WIALGGILLSMTGCEAMFADL). Topologically, residues 290–298 (GHFTSASVR) are cytoplasmic. Residues 299-319 (LAFITIIYPCLILQYMGQAAF) form a helical membrane-spanning segment. Topologically, residues 320–338 (LSKNILDMPTGFYDSIPGP) are extracellular. A helical transmembrane segment spans residues 339–359 (IFWPVFVVATLAAVVGSQAVI). Over 360–390 (SATFSIVKQCHSLGCFPRVKVVHTSRWIYGQ) the chain is Cytoplasmic. A helical transmembrane segment spans residues 391-411 (IYIPEINWILMVLCVAVTVAF). Residues 412-422 (RDITLIGNAYG) are Extracellular-facing. A helical transmembrane segment spans residues 423–443 (VACMTVMFVTTFLMALIMIFV). Residues 444 to 447 (WQKN) lie on the Cytoplasmic side of the membrane. Residues 448–468 (IIFALSFFLLFGSVEVVYLSS) form a helical membrane-spanning segment. At 469–475 (SLMKVTQ) the chain is on the extracellular side. A helical transmembrane segment spans residues 476–496 (GGWVPLVLALIFMSVMYIWHY). At 497–783 (GTRKKYQYDL…LIEVGMAYQV (287 aa)) the chain is on the cytoplasmic side. The interval 662–691 (DLADSMTMRSTKSESLRSLQSSYEQESPNV) is disordered. The span at 677–691 (LRSLQSSYEQESPNV) shows a compositional bias: polar residues.

Belongs to the HAK/KUP transporter (TC 2.A.72.3) family.

The protein resides in the cell membrane. The catalysed reaction is K(+)(in) = K(+)(out). It carries out the reaction Na(+)(in) = Na(+)(out). Functionally, high-affinity potassium transporter. Can transport sodium under high sodium and low potassium concentrations in the extracellular environment. The polypeptide is Probable potassium transporter 2 (HAK2) (Oryza sativa subsp. japonica (Rice)).